The chain runs to 135 residues: Small ribosomal subunit protein uS11 (135 aa).

A compositionally biased stretch (polar residues) spans 1–10 (MPPKSRTATA). Disordered regions lie at residues 1 to 27 (MPPK…HGHA) and 114 to 135 (GAIQ…RRRV). Over residues 12–27 (RKPRRKEKKNVAHGHA) the composition is skewed to basic residues.

This sequence belongs to the universal ribosomal protein uS11 family. In terms of assembly, part of the 30S ribosomal subunit. Interacts with proteins S7 and S18. Binds to IF-3.

Functionally, located on the platform of the 30S subunit, it bridges several disparate RNA helices of the 16S rRNA. Forms part of the Shine-Dalgarno cleft in the 70S ribosome. The chain is Small ribosomal subunit protein uS11 from Kineococcus radiotolerans (strain ATCC BAA-149 / DSM 14245 / SRS30216).